Reading from the N-terminus, the 101-residue chain is NAD(P)H-quinone oxidoreductase subunit 4L, chloroplastic (101 aa).

Transmembrane regions (helical) follow at residues 2 to 22, 32 to 52, and 61 to 81; these read MLEH…YGLI, MCLE…SDFF, and IFSI…LAIV.

This sequence belongs to the complex I subunit 4L family. As to quaternary structure, NDH is composed of at least 16 different subunits, 5 of which are encoded in the nucleus.

The protein resides in the plastid. The protein localises to the chloroplast thylakoid membrane. The catalysed reaction is a plastoquinone + NADH + (n+1) H(+)(in) = a plastoquinol + NAD(+) + n H(+)(out). It catalyses the reaction a plastoquinone + NADPH + (n+1) H(+)(in) = a plastoquinol + NADP(+) + n H(+)(out). Functionally, NDH shuttles electrons from NAD(P)H:plastoquinone, via FMN and iron-sulfur (Fe-S) centers, to quinones in the photosynthetic chain and possibly in a chloroplast respiratory chain. The immediate electron acceptor for the enzyme in this species is believed to be plastoquinone. Couples the redox reaction to proton translocation, and thus conserves the redox energy in a proton gradient. The protein is NAD(P)H-quinone oxidoreductase subunit 4L, chloroplastic of Daucus carota (Wild carrot).